We begin with the raw amino-acid sequence, 331 residues long: Ferredoxin--NADP reductase (331 aa).

Glu38, Gln46, Tyr51, Ala91, Leu125, Asp282, and Ser323 together coordinate FAD.

It belongs to the ferredoxin--NADP reductase type 2 family. Homodimer. It depends on FAD as a cofactor.

The enzyme catalyses 2 reduced [2Fe-2S]-[ferredoxin] + NADP(+) + H(+) = 2 oxidized [2Fe-2S]-[ferredoxin] + NADPH. This Deinococcus geothermalis (strain DSM 11300 / CIP 105573 / AG-3a) protein is Ferredoxin--NADP reductase.